A 564-amino-acid chain; its full sequence is Potassium-transporting ATPase potassium-binding subunit (564 aa).

Helical transmembrane passes span 4 to 24 (YDYWLILAFFAVVLLPAPFLG), 67 to 87 (TLALLAFNLAGFLLLFAILLF), 135 to 155 (VGLTVQNFVSAATGLAVLVAL), 179 to 199 (LYGLLPLCLLLALYLVWQGVP), 258 to 278 (FEVASIILIPVALVFTFGHYV), 286 to 306 (AIIGCMLALFIIGGATSLWAE), 382 to 402 (AGLYGMLLNVLIAVFLAGLMI), 420 to 440 (LLVVTLLVMPVGVLVLGAIAA), 487 to 507 (LMLGLGMLIGRFGYILPVLAL), and 528 to 548 (GPLFVTLLTVTILLLGGLTFL).

It belongs to the KdpA family. As to quaternary structure, the system is composed of three essential subunits: KdpA, KdpB and KdpC.

It is found in the cell inner membrane. In terms of biological role, part of the high-affinity ATP-driven potassium transport (or Kdp) system, which catalyzes the hydrolysis of ATP coupled with the electrogenic transport of potassium into the cytoplasm. This subunit binds the periplasmic potassium ions and delivers the ions to the membrane domain of KdpB through an intramembrane tunnel. The polypeptide is Potassium-transporting ATPase potassium-binding subunit (Pseudomonas fluorescens (strain Pf0-1)).